The following is a 384-amino-acid chain: Galactokinase (384 aa).

Substrate is bound at residue 34–37 (EHTD). Residue 123–129 (SSGLSSS) participates in ATP binding. 2 residues coordinate Mg(2+): Ser-129 and Glu-161. The Proton acceptor role is filled by Asp-173. Tyr-222 is a substrate binding site.

Belongs to the GHMP kinase family. GalK subfamily.

The protein resides in the cytoplasm. The enzyme catalyses alpha-D-galactose + ATP = alpha-D-galactose 1-phosphate + ADP + H(+). It functions in the pathway carbohydrate metabolism; galactose metabolism. In terms of biological role, catalyzes the transfer of the gamma-phosphate of ATP to D-galactose to form alpha-D-galactose-1-phosphate (Gal-1-P). The sequence is that of Galactokinase from Haemophilus influenzae (strain ATCC 51907 / DSM 11121 / KW20 / Rd).